Here is a 283-residue protein sequence, read N- to C-terminus: Tropomyosin (283 aa).

Positions 1–283 (MDAIKKKMQA…LDSAFVELIL (283 aa)) form a coiled coil.

It belongs to the tropomyosin family. Homodimer.

Its function is as follows. Tropomyosin, in association with the troponin complex, plays a central role in the calcium dependent regulation of muscle contraction. The sequence is that of Tropomyosin from Locusta migratoria (Migratory locust).